A 3016-amino-acid chain; its full sequence is Genome polyprotein (3016 aa).

Residue Ser-2 is modified to N-acetylserine; by host. An interaction with STAT1 region spans residues 2 to 23; it reads STLPKPQRKTKRNTNRRPMDVK. The segment at 2–58 is interaction with EIF2AK2/PKR; that stretch reads STLPKPQRKTKRNTNRRPMDVKFPGGGQIVGGVYLLPRRGPRLGVRATRKTSERSQP. Residues 2-59 form an interaction with DDX3X region; that stretch reads STLPKPQRKTKRNTNRRPMDVKFPGGGQIVGGVYLLPRRGPRLGVRATRKTSERSQPR. The interval 2–75 is disordered; sequence STLPKPQRKT…PKARQSQGRH (74 aa). At 2–168 the chain is on the cytoplasmic side; sequence STLPKPQRKT…EDGINYATGN (167 aa). 2 short sequence motifs (nuclear localization signal) span residues 5-13 and 38-43; these read PKPQRKTKR and PRRGPR. Residues 7 to 16 are compositionally biased toward basic residues; the sequence is PQRKTKRNTN. Positions 32 to 47 are enriched in low complexity; sequence GGVYLLPRRGPRLGVR. Ser-53 is modified (phosphoserine; by host). 2 consecutive short sequence motifs (nuclear localization signal) follow at residues 58 to 64 and 66 to 71; these read PRGRRQP and PKARQS. Residues Ser-99 and Ser-116 each carry the phosphoserine; by host modification. An important for endoplasmic reticulum and mitochondrial localization region spans residues 112-152; it reads PRRRSRNLGKVIDTLTCGFADLMGYIPVVGAPLGGVAAALA. The tract at residues 122–173 is interaction with APOA2; sequence VIDTLTCGFADLMGYIPVVGAPLGGVAAALAHGVRAIEDGINYATGNLPGCS. Positions 164–167 are important for lipid droplets localization; it reads YATG. The helical transmembrane segment at 169-189 threads the bilayer; it reads LPGCSFSIFLLALLSCLTTPA. Residues 178–191 constitute a propeptide, ER anchor for the core protein, removed in mature form by host signal peptidase; sequence LLALLSCLTTPASA. Topologically, residues 190–358 are lumenal; sequence SAVHYRNISG…LEGHWGVIGA (169 aa). N-linked (GlcNAc...) asparagine; by host glycosylation is found at Asn-196, Asn-209, Asn-234, and Asn-250. Positions 265-296 are important for fusion; it reads LVGSAAACSALYIGDLCGGVFLVGQLFTFRPR. Asn-305 carries an N-linked (GlcNAc...) asparagine; by host glycan. The chain crosses the membrane as a helical span at residues 359-379; it reads LLYYSMVANWAKVFAVLLLFA. Topologically, residues 380–727 are lumenal; the sequence is GVDATTHIGS…WEYIVLAFLV (348 aa). The segment at 385 to 411 is HVR1; sequence THIGSSASATTNRLTSFFSPGSKQNVQ. Asn-416, Asn-422, and Asn-429 each carry an N-linked (GlcNAc...) (high mannose) asparagine; by host glycan. 4 disulfide bridges follow: Cys-428–Cys-552, Cys-451–Cys-458, Cys-486–Cys-494, and Cys-503–Cys-508. N-linked (GlcNAc...) asparagine; by host glycosylation is present at Asn-447. Residues 474–478 are HVR2; it reads ANISG. A glycan (N-linked (GlcNAc...) asparagine; by host) is linked at Asn-475. The CD81-binding 1 stretch occupies residues 480–493; sequence SNDKPYCWHYPPRP. N-linked (GlcNAc...) asparagine; by host glycosylation occurs at Asn-532. Residues 544–551 are CD81-binding 2; that stretch reads PPRGSWFG. N-linked (GlcNAc...) asparagine; by host glycosylation occurs at Asn-556. Intrachain disulfides connect Cys-564/Cys-569, Cys-583/Cys-587, Cys-599/Cys-622, and Cys-609/Cys-646. Asn-625 and Asn-647 each carry an N-linked (GlcNAc...) (high mannose) asparagine; by host glycan. Cysteines 654 and 679 form a disulfide. Positions 662-673 are PKR/eIF2-alpha phosphorylation homology domain (PePHD); it reads VEMSPLLFSTTQ. Residues 728–748 form a helical membrane-spanning segment; it reads LAVARVCACLWLMFLVGQAEA. The Lumenal segment spans residues 749 to 759; sequence ALENLIVLNAT. A helical transmembrane segment spans residues 760–780; that stretch reads SAAGSQGWVWGVVFICAAWYI. Topologically, residues 781–784 are cytoplasmic; it reads RGRA. A helical membrane pass occupies residues 785 to 805; that stretch reads APITTYAILQLWPLLLLVLAL. Residues 806–815 are Lumenal-facing; the sequence is PRRAYAYNGE. A helical membrane pass occupies residues 816–836; the sequence is EAASLGMLAIVIITIFTLTPA. Residues 837 to 883 lie on the Cytoplasmic side of the membrane; that stretch reads YKTLLISTLWWIQYYIARAEAMLYVWVPSLQVRGGRDAVILLTCLLH. A helical transmembrane segment spans residues 884 to 904; the sequence is PQLGFEVTKAILALLGPLYIL. Over 905–930 the chain is Lumenal; sequence QYSLLKTPYFVRAHILLRVCMFLRGV. The Peptidase C18 domain occupies 905 to 1028; sequence QYSLLKTPYF…DIRDGGWRLL (124 aa). The interval 906-1208 is protease NS2-3; it reads YSLLKTPYFV…PVENMQSTAR (303 aa). Cys-924 carries S-palmitoyl cysteine; by host lipidation. Residues 931–951 form a helical membrane-spanning segment; it reads AGGKYVQAALLRLGAWTGTYI. The interval 931 to 951 is interaction with host SCPS1; sequence AGGKYVQAALLRLGAWTGTYI. The Cytoplasmic portion of the chain corresponds to 952–1659; that stretch reads YDHLTPLSDW…CMSADLEVIT (708 aa). Active-site for protease NS2 activity; shared with dimeric partner residues include His-954, Glu-974, and Cys-995. In terms of domain architecture, Peptidase S29 spans 1029–1210; the sequence is APITAYAQQT…ENMQSTARSP (182 aa). Residues His-1085 and Asp-1109 each act as charge relay system; for serine protease NS3 activity in the active site. Zn(2+) contacts are provided by Cys-1125 and Cys-1127. Catalysis depends on Ser-1167, which acts as the Charge relay system; for serine protease NS3 activity. Zn(2+) is bound by residues Cys-1173 and His-1177. The 153-residue stretch at 1219 to 1371 folds into the Helicase ATP-binding domain; that stretch reads PAVPQTYQVG…PNITEVALSS (153 aa). Residue 1232–1239 coordinates ATP; it reads APTGSGKS. Mg(2+) contacts are provided by Ser-1239 and Glu-1319. The short motif at 1318–1321 is the DECH box element; the sequence is DECH. Residues 1488-1500 are RNA-binding; the sequence is QRRGRTGRGKHGV. A helical membrane pass occupies residues 1660-1680; that stretch reads STWVLVGGVLAALAAYCLSVG. The interval 1681–1692 is NS3-binding; sequence CVVVCGRISTTG. Over 1681-1807 the chain is Cytoplasmic; the sequence is CVVVCGRIST…SLTSPLSTST (127 aa). The helical transmembrane segment at 1808-1828 threads the bilayer; sequence TLLLNILGGWVASQLANPTAS. Topologically, residues 1829–1830 are lumenal; that stretch reads TA. Residues 1831–1851 form a helical membrane-spanning segment; it reads FVVSGLAGATVGSIGLGRVLV. A topological domain (cytoplasmic) is located at residue Asp-1852. The chain crosses the membrane as a helical span at residues 1853–1873; that stretch reads IIAGYGAGVSGALVAFKIMSG. The Lumenal segment spans residues 1874-1883; that stretch reads ETPSAEDMVN. A helical membrane pass occupies residues 1884–1904; the sequence is LLPALLSPGALVVGVVCAAIL. Residues 1905 to 1974 lie on the Cytoplasmic side of the membrane; sequence RRHAGPAEGA…WINSDWSTPC (70 aa). Residue Cys-1974 is the site of S-palmitoyl cysteine; by host attachment. An intramembrane segment occupies 1975–2004; sequence SGSWLRDIWDWVCTVLSDFKVWLKSKLVPA. Residues 2005–2995 are Cytoplasmic-facing; it reads LPGVPFLSCQ…YHSVSRARPR (991 aa). Positions 2013, 2031, 2033, and 2054 each coordinate Zn(2+). Positions 2122–2210 are FKBP8-binding; that stretch reads EFFTEVDGVR…ASSLASQLSA (89 aa). A transcriptional activation region spans residues 2122–2335; the sequence is EFFTEVDGVR…PVPPPRRKSV (214 aa). Residues 2137–2141 form an interaction with non-structural protein 4A region; that stretch reads PACKP. Residues 2191–2443 are interaction with host SKP2; that stretch reads RLARGSPPSC…ALVTPCAAEE (253 aa). Phosphoserine; by host is present on residues Ser-2196, Ser-2199, Ser-2203, Ser-2206, Ser-2209, and Ser-2212. An ISDR region spans residues 2212–2251; sequence SLKATCTTHCAHPDADLIEANLLWRQEVGGNITRVESENK. The tract at residues 2212 to 2277 is interaction with EIF2AK2/PKR; that stretch reads SLKATCTTHC…REPSVPAECH (66 aa). An NS4B-binding region spans residues 2251-2309; it reads KVIVLDSFDPLVPEYDDREPSVPAECHRPNRPKFPPALPIWARPDYNPPLLETWKKPDY. Positions 2302–2379 are V3; the sequence is ETWKKPDYAP…PTTSKSSDQA (78 aa). The SH3-binding motif lies at 2325-2328; that stretch reads PPVP. The Nuclear localization signal motif lies at 2330-2338; the sequence is PRRKSVVHL. Lys-2353 is covalently cross-linked (Glycyl lysine isopeptide (Lys-Gly) (interchain with G-Cter in ubiquitin)). The segment at 2353-2414 is disordered; that stretch reads KSFPTQPAST…PDLSSGSWST (62 aa). A compositionally biased stretch (polar residues) spans 2355–2376; it reads FPTQPASTPDSDSGHPTTSKSS. A Phosphoserine; by host modification is found at Ser-2454. Residues 2639–2757 form the RdRp catalytic domain; the sequence is PMGFSYDTRC…IAESAGVQED (119 aa). Positions 2645, 2743, and 2744 each coordinate Mg(2+). A helical membrane pass occupies residues 2996-3016; sequence IFLLCLLLLSVGVGIFLLPAR.

This sequence belongs to the hepacivirus polyprotein family. Homooligomer. Interacts with E1 (via C-terminus). Interacts with the non-structural protein 5A. Interacts (via N-terminus) with host STAT1 (via SH2 domain); this interaction results in decreased STAT1 phosphorylation and ubiquitin-mediated proteasome-dependent STAT1 degradation, leading to decreased IFN-stimulated gene transcription. Interacts with host STAT3; this interaction constitutively activates STAT3. Interacts with host LTBR receptor. Interacts with host TNFRSF1A receptor and possibly induces apoptosis. Interacts with host HNRPK. Interacts with host YWHAE. Interacts with host UBE3A/E6AP. Interacts with host DDX3X. Interacts with host APOA2. Interacts with host RXRA protein. Interacts with host SP110 isoform 3/Sp110b; this interaction sequesters the transcriptional corepressor SP110 away from the nucleus. Interacts with host CREB3 nuclear transcription protein; this interaction triggers cell transformation. Interacts with host ACY3. Interacts with host C1QR1. Interacts with host RBM24; this interaction, which enhances the interaction of the mature core protein with 5'-UTR, may inhibit viral translation and favor replication. Interacts with host EIF2AK2/PKR; this interaction induces the autophosphorylation of EIF2AK2. Part of the viral assembly initiation complex composed of NS2, E1, E2, NS3, NS4A, NS5A and the mature core protein. In terms of assembly, forms a heterodimer with envelope glycoprotein E2. Interacts with mature core protein. Interacts with protease NS2. The heterodimer E1/E2 interacts with host CLDN1; this interaction plays a role in viral entry into host cell. Interacts with host SPSB2 (via C-terminus). Part of the viral assembly initiation complex composed of NS2, E1, E2, NS3, NS4A, NS5A and the mature core protein. Interacts with host NEURL3; this interaction prevents E1 binding to glycoprotein E2. As to quaternary structure, forms a heterodimer with envelope glycoprotein E1. Interacts with host CD81 and SCARB1 receptors; these interactions play a role in viral entry into host cell. Interacts with host EIF2AK2/PKR; this interaction inhibits EIF2AK2 and probably allows the virus to evade the innate immune response. Interacts with host CD209/DC-SIGN and CLEC4M/DC-SIGNR. Interact with host SPCS1; this interaction is essential for viral particle assembly. Interacts with protease NS2. The heterodimer E1/E2 interacts with host CLDN1; this interaction plays a role in viral entry into host cell. Part of the viral assembly initiation complex composed of NS2, E1, E2, NS3, NS4A, NS5A and the mature core protein. Interacts with host SLC3A2/4F2hc; the interaction may facilitate viral entry into host cell. Interacts with human PLSCR1. Homohexamer. Homoheptamer. Interacts with protease NS2. In terms of assembly, homodimer. Interacts with host SPCS1; this interaction is essential for viral particle assembly. Interacts with envelope glycoprotein E1. Interacts with envelope glycoprotein E2. Interacts with viroporin p7. Interacts with serine protease/helicase NS3. Part of the replication complex composed of NS2, NS3, NS4A, NS4B, NS5A and the RNA-directed RNA polymerase embedded in an ER-derived membranous web. Part of the viral assembly initiation complex composed of NS2, E1, E2, NS3, NS4A, NS5A and the mature core protein. As to quaternary structure, interacts with protease NS2. Interacts with non-structural protein 4A; this interaction stabilizes the folding of NS3 serine protease. NS3-NS4A interaction is essential for NS3 activation and allows membrane anchorage of the latter. NS3/NS4A complex also prevents phosphorylation of host IRF3, thus preventing the establishment of dsRNA induced antiviral state. Interacts with host MAVS; this interaction leads to the cleavage and inhibition of host MAVS. Interacts with host TICAM1; this interaction leads to the cleavage and inhibition of host TICAM1. Interacts with host TANK-binding kinase/TBK1; this interaction results in the inhibition of the association between TBK1 and IRF3, which leads to the inhibition of IRF3 activation. Interacts with host RBM24. Part of the replication complex composed of NS2, NS3, NS4A, NS4B, NS5A and the RNA-directed RNA polymerase embedded in an ER-derived membranous web. Part of the viral assembly initiation complex composed of NS2, E1, E2, NS3, NS4A, NS5A and the mature core protein. Interacts with NS3 serine protease; this interaction stabilizes the folding of NS3 serine protease. NS3-NS4A interaction is essential for NS3 activation and allows membrane anchorage of the latter. Interacts with non-structural protein 5A (via N-terminus). Part of the replication complex composed of NS2, NS3, NS4A, NS4B, NS5A and the RNA-directed RNA polymerase embedded in an ER-derived membranous web. Part of the viral assembly initiation complex composed of NS2, E1, E2, NS3, NS4A, NS5A and the mature core protein. In terms of assembly, homomultimer. Interacts with non-structural protein NS5A. Interacts with host PLA2G4C; this interaction likely initiates the recruitment of replication complexes to lipid droplets. Interacts with host STING; this interaction disrupts the interaction between STING and TBK1 thereby suppressing the interferon signaling. Part of the replication complex composed of NS2, NS3, NS4A, NS4B, NS5A and the RNA-directed RNA polymerase embedded in an ER-derived membranous web. As to quaternary structure, monomer. Homodimer; dimerization is required for RNA-binding. Interacts with the mature core protein. Interacts (via N-terminus) with non-structural protein 4A. Interacts with non-structural protein 4B. Interacts (via region D2) with RNA-directed RNA polymerase. Part of the viral assembly initiation complex composed of NS2, E1, E2, NS3, NS4A, NS5A and the mature core protein. Part of the replication complex composed of NS2, NS3, NS4A, NS4B, NS5A and the RNA-directed RNA polymerase embedded in an ER-derived membranous web. Interacts with host GRB2. Interacts with host BIN1. Interacts with host PIK3R1. Interacts with host SRCAP. Interacts with host FKBP8. Interacts (via C-terminus) with host VAPB (via MSP domain). Interacts with host EIF2AK2/PKR; this interaction leads to disruption of EIF2AK2 dimerization by NS5A and probably allows the virus to evade the innate immune response. Interacts (via N-terminus) with host PACSIN2 (via N-terminus); this interaction attenuates protein kinase C alpha-mediated phosphorylation of PACSIN2 by disrupting the interaction between PACSIN2 and PRKCA. Interacts (via N-terminus) with host SRC kinase (via SH2 domain). Interacts with most Src-family kinases. Interacts with host IFI27 and SKP2; promotes the ubiquitin-mediated proteasomal degradation of NS5A. Interacts with host GPS2. Interacts with host TNFRSF21; this interaction allows the modulation by the virus of JNK, p38 MAPK, STAT3, and Akt signaling pathways in a DR6-dependent manner. Interacts (via N-terminus) with host CIDEB (via N-terminus); this interaction seems to regulate the association of HCV particles with APOE. Interacts with host CHKA/Choline Kinase-alpha; CHKA bridges host PI4KA and NS5A and potentiates NS5A-stimulated PI4KA activity, which then facilitates the targeting of the ternary complex to the ER for viral replication. Interacts with host SPSB2 (via C-terminus); this interaction targets NS5A for ubiquitination and degradation. Interacts with host RAB18; this interaction may promote the association of NS5A and other replicase components with lipid droplets. Interacts (via region D2) with host PPIA/CYPA; the interaction stimulates RNA-binding ability of NS5A and is dependent on the peptidyl-prolyl cis-trans isomerase activity of PPIA/CYPA. Interacts with host TRIM14; this interaction induces the degradation of NS5A. Homooligomer. Interacts with non-structural protein 5A. Interacts with host VAPB. Interacts with host PRK2/PKN2. Interacts with host HNRNPA1 and SEPT6; these interactions facilitate viral replication. Part of the replication complex composed of NS2, NS3, NS4A, NS4B, NS5A and the RNA-directed RNA polymerase. Requires Zn(2+) as cofactor. It depends on Mg(2+) as a cofactor. In terms of processing, specific enzymatic cleavages in vivo yield mature proteins. The structural proteins, core, E1, E2 and p7 are produced by proteolytic processing by host signal peptidases. The core protein precursor is synthesized as a 23 kDa, which is retained in the ER membrane through the hydrophobic signal peptide. Cleavage by the signal peptidase releases the 21 kDa mature core protein. The cleavage of the core protein precursor occurs between aminoacids 176 and 188 but the exact cleavage site is not known. Some degraded forms of the core protein appear as well during the course of infection. The other proteins (p7, NS2, NS3, NS4A, NS4B, NS5A and NS5B) are cleaved by the viral proteases. Autoprocessing between NS2 and NS3 is mediated by the NS2 cysteine protease catalytic domain and regulated by the NS3 N-terminal domain. Post-translationally, phosphorylated by host PKC and PKA. Ubiquitinated; mediated by UBE3A and leading to core protein subsequent proteasomal degradation. In terms of processing, highly N-glycosylated. Post-translationally, palmitoylation is required for NS2/3 autoprocessing and E2 recruitment to membranes. Palmitoylated. This modification may play a role in its polymerization or in protein-protein interactions. In terms of processing, phosphorylated on serines in a basal form termed p56. p58 is a hyperphosphorylated form of p56. p56 and p58 coexist in the cell in roughly equivalent amounts. Hyperphosphorylation is dependent on the presence of NS4A. Host CSNK1A1/CKI-alpha or RPS6KB1 kinases may be responsible for NS5A phosphorylation. Post-translationally, tyrosine phosphorylation is essential for the interaction with host SRC. Ubiquitinated. Ubiquitination, most probably at Lys-2353, mediated by host IFI27 and SKP2 leads to proteasomal degradation, restricting viral infection. Ubiquitination by host TRIM22 leads to interruption of viral replication. In terms of processing, the N-terminus is phosphorylated by host PRK2/PKN2.

It is found in the host endoplasmic reticulum membrane. The protein resides in the host mitochondrion membrane. The protein localises to the virion. It localises to the host cytoplasm. Its subcellular location is the host nucleus. It is found in the host lipid droplet. The protein resides in the virion membrane. The protein localises to the host mitochondrion. It localises to the host cell membrane. Its subcellular location is the host perinuclear region. The enzyme catalyses Hydrolysis of four peptide bonds in the viral precursor polyprotein, commonly with Asp or Glu in the P6 position, Cys or Thr in P1 and Ser or Ala in P1'.. The catalysed reaction is a ribonucleoside 5'-triphosphate + H2O = a ribonucleoside 5'-diphosphate + phosphate + H(+). It carries out the reaction ATP + H2O = ADP + phosphate + H(+). It catalyses the reaction RNA(n) + a ribonucleoside 5'-triphosphate = RNA(n+1) + diphosphate. Inhibited by the antiviral drug hexamethylene amiloride. Inhibition by amantadine appears to be genotype-dependent. Also inhibited by long-alkyl-chain iminosugar derivatives. Its activity is regulated as follows. Activity is up-regulated by PRK2/PKN2-mediated phosphorylation. Packages viral RNA to form a viral nucleocapsid, and promotes virion budding. Participates in the viral particle production as a result of its interaction with the non-structural protein 5A. Binds RNA and may function as a RNA chaperone to induce the RNA structural rearrangements taking place during virus replication. Modulates viral translation initiation by interacting with viral IRES and 40S ribosomal subunit. Affects various cell signaling pathways, host immunity and lipid metabolism. Prevents the establishment of cellular antiviral state by blocking the interferon-alpha/beta (IFN-alpha/beta) and IFN-gamma signaling pathways and by blocking the formation of phosphorylated STAT1 and promoting ubiquitin-mediated proteasome-dependent degradation of STAT1. Activates STAT3 leading to cellular transformation. Regulates the activity of cellular genes, including c-myc and c-fos. May repress the promoter of p53, and sequester CREB3 and SP110 isoform 3/Sp110b in the cytoplasm. Represses cell cycle negative regulating factor CDKN1A, thereby interrupting an important check point of normal cell cycle regulation. Targets transcription factors involved in the regulation of inflammatory responses and in the immune response: suppresses TNF-induced NF-kappa-B activation, and activates AP-1. Binds to dendritic cells (DCs) via C1QR1, resulting in down-regulation of T-lymphocytes proliferation. Alters lipid metabolism by interacting with hepatocellular proteins involved in lipid accumulation and storage. Induces up-regulation of FAS promoter activity, and thereby contributes to the increased triglyceride accumulation in hepatocytes (steatosis). Its function is as follows. Forms a heterodimer with envelope glycoprotein E2, which mediates virus attachment to the host cell, virion internalization through clathrin-dependent endocytosis and fusion with host membrane. Fusion with the host cell is most likely mediated by both E1 and E2, through conformational rearrangements of the heterodimer required for fusion rather than a classical class II fusion mechanism. E1/E2 heterodimer binds host apolipoproteins such as APOB and ApoE thereby forming a lipo-viro-particle (LVP). APOE associated to the LVP allows the initial virus attachment to cell surface receptors such as the heparan sulfate proteoglycans (HSPGs), syndecan-1 (SDC1), syndecan-1 (SDC2), the low-density lipoprotein receptor (LDLR) and scavenger receptor class B type I (SCARB1). The cholesterol transfer activity of SCARB1 allows E2 exposure and binding of E2 to SCARB1 and the tetraspanin CD81. E1/E2 heterodimer binding on CD81 activates the epithelial growth factor receptor (EGFR) signaling pathway. Diffusion of the complex E1-E2-EGFR-SCARB1-CD81 to the cell lateral membrane allows further interaction with Claudin 1 (CLDN1) and occludin (OCLN) to finally trigger HCV entry. In terms of biological role, forms a heterodimer with envelope glycoprotein E1, which mediates virus attachment to the host cell, virion internalization through clathrin-dependent endocytosis and fusion with host membrane. Fusion with the host cell is most likely mediated by both E1 and E2, through conformational rearrangements of the heterodimer required for fusion rather than a classical class II fusion mechanism. The interaction between envelope glycoprotein E2 and host apolipoprotein E/APOE allows the proper assembly, maturation and infectivity of the viral particles. This interaction is probably promoted via the up-regulation of cellular autophagy by the virus. E1/E2 heterodimer binds host apolipoproteins such as APOB and APOE thereby forming a lipo-viro-particle (LVP). APOE associated to the LVP allows the initial virus attachment to cell surface receptors such as the heparan sulfate proteoglycans (HSPGs), syndecan-1 (SDC1), syndecan-1 (SDC2), the low-density lipoprotein receptor (LDLR) and scavenger receptor class B type I (SCARB1). The cholesterol transfer activity of SCARB1 allows E2 exposure and binding of E2 to SCARB1 and the tetraspanin CD81. E1/E2 heterodimer binding on CD81 activates the epithelial growth factor receptor (EGFR) signaling pathway. Diffusion of the complex E1-E2-EGFR-SCARB1-CD81 to the cell lateral membrane allows further interaction with Claudin 1 (CLDN1) and occludin (OCLN) to finally trigger HCV entry. Inhibits host EIF2AK2/PKR activation, preventing the establishment of an antiviral state. Viral ligand for CD209/DC-SIGN and CLEC4M/DC-SIGNR, which are respectively found on dendritic cells (DCs), and on liver sinusoidal endothelial cells and macrophage-like cells of lymph node sinuses. These interactions allow the capture of circulating HCV particles by these cells and subsequent facilitated transmission to permissive cells such as hepatocytes and lymphocyte subpopulations. The interaction between E2 and host amino acid transporter complex formed by SLC3A2 and SLC7A5/LAT1 may facilitate viral entry into host cell. Functionally, ion channel protein that acts as a viroporin and plays an essential role in the assembly, envelopment and secretion of viral particles. Regulates the host cell secretory pathway, which induces the intracellular retention of viral glycoproteins and favors assembly of viral particles. Creates a pore in acidic organelles and releases Ca(2+) and H(+) in the cytoplasm of infected cells, leading to a productive viral infection. High levels of cytoplasmic Ca(2+) may trigger membrane trafficking and transport of viral ER-associated proteins to viroplasms, sites of viral genome replication. This ionic imbalance induces the assembly of the inflammasome complex, which triggers the maturation of pro-IL-1beta into IL-1beta through the action of caspase-1. Targets also host mitochondria and induces mitochondrial depolarization. In addition of its role as a viroporin, acts as a lipid raft adhesion factor. Cysteine protease required for the proteolytic auto-cleavage between the non-structural proteins NS2 and NS3. The N-terminus of NS3 is required for the function of NS2 protease (active region NS2-3). Promotes the initiation of viral particle assembly by mediating the interaction between structural and non-structural proteins. Its function is as follows. Displays three enzymatic activities: serine protease with a chymotrypsin-like fold, NTPase and RNA helicase. NS3 serine protease, in association with NS4A, is responsible for the cleavages of NS3-NS4A, NS4A-NS4B, NS4B-NS5A and NS5A-NS5B. The NS3/NS4A complex prevents phosphorylation of host IRF3, thus preventing the establishment of dsRNA induced antiviral state. The NS3/NS4A complex induces host amino acid transporter component SLC3A2, thus contributing to HCV propagation. NS3 RNA helicase binds to RNA and unwinds both dsDNA and dsRNA in the 3' to 5' direction, and likely resolves RNA complicated stable secondary structures in the template strand. Binds a single ATP and catalyzes the unzipping of a single base pair of dsRNA. Inhibits host antiviral proteins TBK1 and IRF3 thereby preventing the establishment of an antiviral state. Cleaves host MAVS/CARDIF thereby preventing the establishment of an antiviral state. Cleaves host TICAM1/TRIF, thereby disrupting TLR3 signaling and preventing the establishment of an antiviral state. In terms of biological role, peptide cofactor which forms a non-covalent complex with the N-terminal of NS3 serine protease. The NS3/NS4A complex prevents phosphorylation of host IRF3, thus preventing the establishment of dsRNA induced antiviral state. The NS3/NS4A complex induces host amino acid transporter component SLC3A2, thus contributing to HCV propagation. Functionally, induces a specific membrane alteration that serves as a scaffold for the virus replication complex. This membrane alteration gives rise to the so-called ER-derived membranous web that contains the replication complex. NS4B self-interaction contributes to its function in membranous web formation. Promotes host TRIF protein degradation in a CASP8-dependent manner thereby inhibiting host TLR3-mediated interferon signaling. Disrupts the interaction between STING and TBK1 contributing to the inhibition of interferon signaling. Phosphorylated protein that is indispensable for viral replication and assembly. Both hypo- and hyperphosphorylated states are required for the viral life cycle. The hyperphosphorylated form of NS5A is an inhibitor of viral replication. Involved in RNA-binding and especially in binding to the viral genome. Zinc is essential for RNA-binding. Participates in the viral particle production as a result of its interaction with the mature viral core protein. Its interaction with host VAPB may target the viral replication complex to vesicles. Down-regulates viral IRES translation initiation. Mediates interferon resistance, presumably by interacting with and inhibiting host EIF2AK2/PKR. Prevents BIN1-induced apoptosis. Acts as a transcriptional activator of some host genes important for viral replication when localized in the nucleus. Via the interaction with host PACSIN2, modulates lipid droplet formation in order to promote virion assembly. Modulates TNFRSF21/DR6 signaling pathway for viral propagation. Its function is as follows. RNA-dependent RNA polymerase that performs primer-template recognition and RNA synthesis during viral replication. Initiates RNA transcription/replication at a flavin adenine dinucleotide (FAD), resulting in a 5'- FAD cap on viral RNAs. In this way, recognition of viral 5' RNA by host pattern recognition receptors can be bypassed, thereby evading activation of antiviral pathways. The sequence is that of Genome polyprotein from Hepatitis C virus genotype 6k (isolate VN405) (HCV).